The primary structure comprises 511 residues: Histidine ammonia-lyase (511 aa).

The segment at residues 142-144 is a cross-link (5-imidazolinone (Ala-Gly)); that stretch reads ASG. Ser143 bears the 2,3-didehydroalanine (Ser) mark.

Belongs to the PAL/histidase family. Post-translationally, contains an active site 4-methylidene-imidazol-5-one (MIO), which is formed autocatalytically by cyclization and dehydration of residues Ala-Ser-Gly.

It is found in the cytoplasm. It carries out the reaction L-histidine = trans-urocanate + NH4(+). Its pathway is amino-acid degradation; L-histidine degradation into L-glutamate; N-formimidoyl-L-glutamate from L-histidine: step 1/3. This chain is Histidine ammonia-lyase, found in Brucella ovis (strain ATCC 25840 / 63/290 / NCTC 10512).